A 61-amino-acid polypeptide reads, in one-letter code: Large ribosomal subunit protein eL29 (61 aa).

The segment covering 1 to 26 (MAKSKNHTNHNQNKKAHRNGIKRPQK) has biased composition (basic residues). The interval 1-32 (MAKSKNHTNHNQNKKAHRNGIKRPQKHRYDSL) is disordered.

Belongs to the eukaryotic ribosomal protein eL29 family. In terms of assembly, component of the large ribosomal subunit (LSU). Mature yeast ribosomes consist of a small (40S) and a large (60S) subunit. The 40S small subunit contains 1 molecule of ribosomal RNA (18S rRNA) and at least 33 different proteins. The large 60S subunit contains 3 rRNA molecules (25S, 5.8S and 5S rRNA) and at least 46 different proteins.

The protein localises to the cytoplasm. Its subcellular location is the nucleus. The protein resides in the nucleolus. Its function is as follows. Component of the ribosome, a large ribonucleoprotein complex responsible for the synthesis of proteins in the cell. The small ribosomal subunit (SSU) binds messenger RNAs (mRNAs) and translates the encoded message by selecting cognate aminoacyl-transfer RNA (tRNA) molecules. The large subunit (LSU) contains the ribosomal catalytic site termed the peptidyl transferase center (PTC), which catalyzes the formation of peptide bonds, thereby polymerizing the amino acids delivered by tRNAs into a polypeptide chain. The nascent polypeptides leave the ribosome through a tunnel in the LSU and interact with protein factors that function in enzymatic processing, targeting, and the membrane insertion of nascent chains at the exit of the ribosomal tunnel. This chain is Large ribosomal subunit protein eL29 (rpl29), found in Schizosaccharomyces pombe (strain 972 / ATCC 24843) (Fission yeast).